The following is a 298-amino-acid chain: Nucleotide-binding protein GTNG_3015 (298 aa).

Residue 17–24 (GMSGAGKT) participates in ATP binding. 68–71 (DLRS) contacts GTP.

Belongs to the RapZ-like family.

In terms of biological role, displays ATPase and GTPase activities. This chain is Nucleotide-binding protein GTNG_3015, found in Geobacillus thermodenitrificans (strain NG80-2).